The following is a 160-amino-acid chain: Phosphopantetheine adenylyltransferase (160 aa).

Position 10 (serine 10) interacts with substrate. Residues 10-11 and histidine 18 contribute to the ATP site; that span reads SF. 3 residues coordinate substrate: lysine 42, leucine 74, and arginine 88. Residues 89–91, glutamate 99, and 124–130 contribute to the ATP site; these read GLR and YSFLSSS.

This sequence belongs to the bacterial CoaD family. As to quaternary structure, homohexamer. It depends on Mg(2+) as a cofactor.

Its subcellular location is the cytoplasm. It catalyses the reaction (R)-4'-phosphopantetheine + ATP + H(+) = 3'-dephospho-CoA + diphosphate. It participates in cofactor biosynthesis; coenzyme A biosynthesis; CoA from (R)-pantothenate: step 4/5. Its function is as follows. Reversibly transfers an adenylyl group from ATP to 4'-phosphopantetheine, yielding dephospho-CoA (dPCoA) and pyrophosphate. The protein is Phosphopantetheine adenylyltransferase of Bacillus pumilus (strain SAFR-032).